The chain runs to 500 residues: Ent-cassadiene C11-alpha-hydroxylase 1 (500 aa).

The helical transmembrane segment at 4–24 (SQVWLLWGALSVAVLFYLSTL) threads the bilayer. C442 is a binding site for heme.

It belongs to the cytochrome P450 family. Heme is required as a cofactor.

It localises to the membrane. It carries out the reaction ent-cassa-12,15-diene + reduced [NADPH--hemoprotein reductase] + O2 = ent-11beta-hydroxycassa-12,15-diene + oxidized [NADPH--hemoprotein reductase] + H2O + H(+). Its function is as follows. Enzyme of the diterpenoid metabolism involved in the biosynthesis of antibacterial oryzalides such as phytocassane. Can use ent-cassadiene as substrate, but not C11-alpha-hydroxy-ent-cassadiene, ent-pimaradiene, ent-sandaracopimaradiene, ent-kaurene, ent-isokaurene, syn-pimaradiene, syn-stemarene, syn-stemodene. In Oryza sativa subsp. japonica (Rice), this protein is Ent-cassadiene C11-alpha-hydroxylase 1.